The chain runs to 558 residues: Glucose-6-phosphate isomerase (558 aa).

Position 12 is an N6-acetyllysine (Lys-12). Phosphoserine occurs at positions 86 and 107. Position 142 is an N6-acetyllysine (Lys-142). A D-glucose 6-phosphate-binding site is contributed by 159–160 (GS). Ser-185 is modified (phosphoserine; by CK2). 210–215 (SKTFTT) contributes to the D-glucose 6-phosphate binding site. Thr-250 bears the Phosphothreonine mark. 3 residues coordinate D-glucose 6-phosphate: Gln-354, Glu-358, and His-389. Glu-358 serves as the catalytic Proton donor. His-389 is a catalytic residue. Residue Lys-454 is modified to N6-acetyllysine; alternate. An N6-malonyllysine; alternate modification is found at Lys-454. Lys-454 is subject to N6-succinyllysine; alternate. Ser-455 is subject to Phosphoserine. Residue Lys-519 coordinates D-glucose 6-phosphate. Residue Lys-519 is part of the active site.

The protein belongs to the GPI family. In terms of assembly, homodimer; in the catalytically active form. Monomer in the secreted form. In terms of processing, phosphorylation at Ser-185 by CK2 has been shown to decrease enzymatic activity and may contribute to secretion by a non-classical secretory pathway. ISGylated.

The protein localises to the cytoplasm. The protein resides in the secreted. It catalyses the reaction alpha-D-glucose 6-phosphate = beta-D-fructose 6-phosphate. Its pathway is carbohydrate degradation; glycolysis; D-glyceraldehyde 3-phosphate and glycerone phosphate from D-glucose: step 2/4. In the cytoplasm, catalyzes the conversion of glucose-6-phosphate to fructose-6-phosphate, the second step in glycolysis, and the reverse reaction during gluconeogenesis. Besides it's role as a glycolytic enzyme, also acts as a secreted cytokine: acts as an angiogenic factor (AMF) that stimulates endothelial cell motility. Acts as a neurotrophic factor, neuroleukin, for spinal and sensory neurons. It is secreted by lectin-stimulated T-cells and induces immunoglobulin secretion. In Cricetulus griseus (Chinese hamster), this protein is Glucose-6-phosphate isomerase.